The sequence spans 312 residues: DNA-directed RNA polymerase subunit alpha (312 aa).

Residues 1–229 (MLQYQIDRID…ELFQPLATVT (229 aa)) are alpha N-terminal domain (alpha-NTD). Residues 241–312 (SPEAQIPLEE…ISIPQSRTSV (72 aa)) form an alpha C-terminal domain (alpha-CTD) region.

This sequence belongs to the RNA polymerase alpha chain family. In cyanobacteria the RNAP catalytic core is composed of 2 alpha, 1 beta, 1 beta', 1 gamma and 1 omega subunit. When a sigma factor is associated with the core the holoenzyme is formed, which can initiate transcription.

The enzyme catalyses RNA(n) + a ribonucleoside 5'-triphosphate = RNA(n+1) + diphosphate. DNA-dependent RNA polymerase catalyzes the transcription of DNA into RNA using the four ribonucleoside triphosphates as substrates. In Prochlorococcus marinus (strain MIT 9215), this protein is DNA-directed RNA polymerase subunit alpha.